We begin with the raw amino-acid sequence, 676 residues long: UvrABC system protein B (676 aa).

In terms of domain architecture, Helicase ATP-binding spans 26–414 (EGLENGLAHQ…SDGEIAEQVV (389 aa)). 39–46 (GVTGSGKT) provides a ligand contact to ATP. Positions 92 to 115 (YFDYYQPEAYVPTTDTFIEKDSSV) match the Beta-hairpin motif. The region spanning 432–598 (QVDDLLSEIR…ALKKDVADIL (167 aa)) is the Helicase C-terminal domain. The UVR domain occupies 636-671 (EKAIQKLESKMYQHAKDLEFEQAAQVRDEIDNLRKQ).

This sequence belongs to the UvrB family. In terms of assembly, forms a heterotetramer with UvrA during the search for lesions. Interacts with UvrC in an incision complex.

It localises to the cytoplasm. Its function is as follows. The UvrABC repair system catalyzes the recognition and processing of DNA lesions. A damage recognition complex composed of 2 UvrA and 2 UvrB subunits scans DNA for abnormalities. Upon binding of the UvrA(2)B(2) complex to a putative damaged site, the DNA wraps around one UvrB monomer. DNA wrap is dependent on ATP binding by UvrB and probably causes local melting of the DNA helix, facilitating insertion of UvrB beta-hairpin between the DNA strands. Then UvrB probes one DNA strand for the presence of a lesion. If a lesion is found the UvrA subunits dissociate and the UvrB-DNA preincision complex is formed. This complex is subsequently bound by UvrC and the second UvrB is released. If no lesion is found, the DNA wraps around the other UvrB subunit that will check the other stand for damage. In Aliivibrio fischeri (strain ATCC 700601 / ES114) (Vibrio fischeri), this protein is UvrABC system protein B.